The chain runs to 396 residues: CCA-adding enzyme (396 aa).

ATP contacts are provided by Gly-32 and Arg-35. Positions 32 and 35 each coordinate CTP. The Mg(2+) site is built by Asp-45 and Asp-47. Arg-116, Asp-159, Arg-162, Arg-165, and Arg-168 together coordinate ATP. Residues Arg-116, Asp-159, Arg-162, Arg-165, and Arg-168 each contribute to the CTP site.

Belongs to the tRNA nucleotidyltransferase/poly(A) polymerase family. Bacterial CCA-adding enzyme type 3 subfamily. As to quaternary structure, homodimer. It depends on Mg(2+) as a cofactor.

It catalyses the reaction a tRNA precursor + 2 CTP + ATP = a tRNA with a 3' CCA end + 3 diphosphate. It carries out the reaction a tRNA with a 3' CCA end + 2 CTP + ATP = a tRNA with a 3' CCACCA end + 3 diphosphate. Its function is as follows. Catalyzes the addition and repair of the essential 3'-terminal CCA sequence in tRNAs without using a nucleic acid template. Adds these three nucleotides in the order of C, C, and A to the tRNA nucleotide-73, using CTP and ATP as substrates and producing inorganic pyrophosphate. tRNA 3'-terminal CCA addition is required both for tRNA processing and repair. Also involved in tRNA surveillance by mediating tandem CCA addition to generate a CCACCA at the 3' terminus of unstable tRNAs. While stable tRNAs receive only 3'-terminal CCA, unstable tRNAs are marked with CCACCA and rapidly degraded. The chain is CCA-adding enzyme from Lactobacillus delbrueckii subsp. bulgaricus (strain ATCC BAA-365 / Lb-18).